The sequence spans 345 residues: Sorting nexin-15 (345 aa).

The region spanning Met-1–Arg-130 is the PX domain. Arg-105 is subject to Omega-N-methylarginine. The tract at residues Glu-133–Leu-163 is disordered. Over residues Leu-141–Pro-151 the composition is skewed to pro residues. Phosphoserine is present on residues Ser-208 and Ser-234. Residues Ser-226–Ala-274 form a disordered region. Positions Ala-272 to Ser-345 constitute an MIT domain.

This sequence belongs to the sorting nexin family.

Its function is as follows. May be involved in several stages of intracellular trafficking. Overexpression of SNX15 disrupts the normal trafficking of proteins from the plasma membrane to recycling endosomes or the TGN. This chain is Sorting nexin-15 (SNX15), found in Bos taurus (Bovine).